We begin with the raw amino-acid sequence, 133 residues long: uncharacterized protein (133 aa).

A DNA-binding region (recombinase) is located at residues Met-1–Phe-82.

This is an uncharacterized protein from Bacillus phage phi105 (Bacteriophage phi-105).